We begin with the raw amino-acid sequence, 670 residues long: DNA ligase (670 aa).

NAD(+)-binding positions include 32-36 (DSEYD), 81-82 (SL), and Glu-114. Residue Lys-116 is the N6-AMP-lysine intermediate of the active site. NAD(+) contacts are provided by Arg-137, Glu-174, Lys-291, and Lys-315. Residues Cys-409, Cys-412, Cys-427, and Cys-433 each contribute to the Zn(2+) site. In terms of domain architecture, BRCT spans 592 to 670 (ASENLFKDKT…EEEFLAQITR (79 aa)).

It belongs to the NAD-dependent DNA ligase family. LigA subfamily. It depends on Mg(2+) as a cofactor. The cofactor is Mn(2+).

It catalyses the reaction NAD(+) + (deoxyribonucleotide)n-3'-hydroxyl + 5'-phospho-(deoxyribonucleotide)m = (deoxyribonucleotide)n+m + AMP + beta-nicotinamide D-nucleotide.. Its function is as follows. DNA ligase that catalyzes the formation of phosphodiester linkages between 5'-phosphoryl and 3'-hydroxyl groups in double-stranded DNA using NAD as a coenzyme and as the energy source for the reaction. It is essential for DNA replication and repair of damaged DNA. The sequence is that of DNA ligase from Haemophilus influenzae (strain ATCC 51907 / DSM 11121 / KW20 / Rd).